A 319-amino-acid chain; its full sequence is ATP-dependent 6-phosphofructokinase (319 aa).

Gly11 is a binding site for ATP. 21 to 25 (RAVVR) contacts ADP. ATP is bound by residues 72 to 73 (RC) and 102 to 105 (GDGS). Asp103 is a binding site for Mg(2+). 125–127 (TID) lines the substrate pocket. Asp127 functions as the Proton acceptor in the catalytic mechanism. Residue Arg154 coordinates ADP. Residues Arg162 and 169–171 (MGR) each bind substrate. ADP-binding positions include 185 to 187 (GAE), Arg211, and 213 to 215 (KKH). Substrate contacts are provided by residues Glu222, Arg243, and 249–252 (HVQR).

This sequence belongs to the phosphofructokinase type A (PFKA) family. ATP-dependent PFK group I subfamily. Prokaryotic clade 'B1' sub-subfamily. Homotetramer. It depends on Mg(2+) as a cofactor.

The protein resides in the cytoplasm. It catalyses the reaction beta-D-fructose 6-phosphate + ATP = beta-D-fructose 1,6-bisphosphate + ADP + H(+). It participates in carbohydrate degradation; glycolysis; D-glyceraldehyde 3-phosphate and glycerone phosphate from D-glucose: step 3/4. Its activity is regulated as follows. Allosterically activated by ADP and other diphosphonucleosides, and allosterically inhibited by phosphoenolpyruvate. In terms of biological role, catalyzes the phosphorylation of D-fructose 6-phosphate to fructose 1,6-bisphosphate by ATP, the first committing step of glycolysis. The polypeptide is ATP-dependent 6-phosphofructokinase (Geobacillus sp. (strain WCH70)).